The primary structure comprises 470 residues: Tert-butanol monooxygenase / tert-amyl alcohol desaturase oxygenase subunit (470 aa).

The 105-residue stretch at 51 to 155 (WQPVCLSQEL…AFERNGLVFA (105 aa)) folds into the Rieske domain. [2Fe-2S] cluster is bound by residues cysteine 91, histidine 93, cysteine 110, and histidine 113.

The protein belongs to the bacterial ring-hydroxylating dioxygenase alpha subunit family. This two-component enzyme is composed of an oxygenase (MdpJ) and a reductase (MdpK). The cofactor is [2Fe-2S] cluster.

The catalysed reaction is tert-butanol + NADPH + O2 + H(+) = 2-methylpropane-1,2-diol + NADP(+) + H2O. The enzyme catalyses 2-methylbutan-2-ol + NADPH + O2 + H(+) = 3-hydroxy-3-methylbut-1-ene + NADP(+) + 2 H2O. Oxygenase component of a two-component system involved in the degradation of tertiary alcohols such as tert-butyl alcohol (TBA) and tert-amyl alcohol (TAA). In the presence of TBA, catalyzes the hydroxylation of TBA to 2-methylpropane-1,2-diol. In the presence of TAA, functions as a desaturase, enabling the degradation of TAA and resulting in the formation of the hemiterpene 3-hydroxy-3-methylbut-1-ene. The specificity of the catalysis depends strongly on the molecule structure of the substrate, allowing either hydroxylation or desaturation reactions. Also catalyzes the desaturation of the tertiary alcohol 3-methyl-3-pentanol (a C6 homolog of TBA and TAA) to 3-methyl-1-penten-3-ol, with lower efficiency. In addition, can transform some secondary alcohols, including the hydroxylation of 2-propanol to 1,2-propanediol, and the desaturation of 2-butanol, 3-methyl-2-butanol and 3-pentanol. The polypeptide is Tert-butanol monooxygenase / tert-amyl alcohol desaturase oxygenase subunit (Aquincola tertiaricarbonis).